We begin with the raw amino-acid sequence, 244 residues long: 5-oxoprolinase subunit A (244 aa).

It belongs to the LamB/PxpA family. Forms a complex composed of PxpA, PxpB and PxpC.

The catalysed reaction is 5-oxo-L-proline + ATP + 2 H2O = L-glutamate + ADP + phosphate + H(+). Functionally, catalyzes the cleavage of 5-oxoproline to form L-glutamate coupled to the hydrolysis of ATP to ADP and inorganic phosphate. The sequence is that of 5-oxoprolinase subunit A from Salmonella arizonae (strain ATCC BAA-731 / CDC346-86 / RSK2980).